A 209-amino-acid chain; its full sequence is Probable phosphatidylglycerophosphate synthase (209 aa).

4 consecutive transmembrane segments (helical) span residues I32–G52, A105–T125, W147–L167, and L171–V191.

Belongs to the CDP-alcohol phosphatidyltransferase class-I family.

Its subcellular location is the cell membrane. It catalyses the reaction a CDP-1,2-diacyl-sn-glycerol + sn-glycerol 3-phosphate = a 1,2-diacyl-sn-glycero-3-phospho-(1'-sn-glycero-3'-phosphate) + CMP + H(+). It functions in the pathway lipid metabolism; phospholipid metabolism. Probably catalyzes the synthesis of phosphatidylglycerophosphate by transferring a phosphatidyl group from CDP-diacylglycerol to glycerol 3-phosphate. In Mycobacterium tuberculosis (strain CDC 1551 / Oshkosh), this protein is Probable phosphatidylglycerophosphate synthase.